Reading from the N-terminus, the 182-residue chain is Large ribosomal subunit protein bL25 (182 aa).

Belongs to the bacterial ribosomal protein bL25 family. CTC subfamily. Part of the 50S ribosomal subunit; part of the 5S rRNA/L5/L18/L25 subcomplex. Contacts the 5S rRNA. Binds to the 5S rRNA independently of L5 and L18.

Its function is as follows. This is one of the proteins that binds to the 5S RNA in the ribosome where it forms part of the central protuberance. This is Large ribosomal subunit protein bL25 from Borrelia hermsii (strain HS1 / DAH).